Consider the following 145-residue polypeptide: Transcription antitermination protein NusB (145 aa).

It belongs to the NusB family.

Its function is as follows. Involved in transcription antitermination. Required for transcription of ribosomal RNA (rRNA) genes. Binds specifically to the boxA antiterminator sequence of the ribosomal RNA (rrn) operons. The polypeptide is Transcription antitermination protein NusB (Paraburkholderia phymatum (strain DSM 17167 / CIP 108236 / LMG 21445 / STM815) (Burkholderia phymatum)).